Consider the following 405-residue polypeptide: Tryptophan synthase beta chain (405 aa).

K95 carries the N6-(pyridoxal phosphate)lysine modification.

It belongs to the TrpB family. As to quaternary structure, tetramer of two alpha and two beta chains. Pyridoxal 5'-phosphate is required as a cofactor.

It catalyses the reaction (1S,2R)-1-C-(indol-3-yl)glycerol 3-phosphate + L-serine = D-glyceraldehyde 3-phosphate + L-tryptophan + H2O. It participates in amino-acid biosynthesis; L-tryptophan biosynthesis; L-tryptophan from chorismate: step 5/5. In terms of biological role, the beta subunit is responsible for the synthesis of L-tryptophan from indole and L-serine. This chain is Tryptophan synthase beta chain, found in Pseudomonas putida (strain W619).